The chain runs to 65 residues: Potassium channel toxin kappa-KTx 2.7 (65 aa).

The first 26 residues, 1 to 26 (MKTSGTVYVFLLLLAFGIFTDISSAC), serve as a signal peptide directing secretion. Residues 27–39 (SEQMDDEDSYEVE) constitute a propeptide that is removed on maturation. 2 disulfide bridges follow: Cys45–Cys63 and Cys49–Cys59.

This sequence belongs to the short scorpion toxin superfamily. Potassium channel inhibitor kappa-KTx family. Kappa-KTx 2 subfamily. Expressed by the venom gland.

The protein localises to the secreted. In terms of biological role, weakly inhibits the Kv7.1/KCNQ1 channel (10 uM of the toxin inhibits currents by 17.8%). The polypeptide is Potassium channel toxin kappa-KTx 2.7 (Heterometrus petersii (Asian forest scorpion)).